A 295-amino-acid chain; its full sequence is Small ribosomal subunit biogenesis GTPase RsgA (295 aa).

Residues 68-228 (KNLLTKPHVA…VVDTPGFANL (161 aa)) enclose the CP-type G domain. Residues 117–120 (NKMD) and 170–178 (GLSGVGKSS) contribute to the GTP site. Zn(2+) contacts are provided by C250, C255, H257, and C263.

The protein belongs to the TRAFAC class YlqF/YawG GTPase family. RsgA subfamily. Monomer. Associates with 30S ribosomal subunit, binds 16S rRNA. The cofactor is Zn(2+).

It localises to the cytoplasm. One of several proteins that assist in the late maturation steps of the functional core of the 30S ribosomal subunit. Helps release RbfA from mature subunits. May play a role in the assembly of ribosomal proteins into the subunit. Circularly permuted GTPase that catalyzes slow GTP hydrolysis, GTPase activity is stimulated by the 30S ribosomal subunit. The polypeptide is Small ribosomal subunit biogenesis GTPase RsgA (Thermotoga maritima (strain ATCC 43589 / DSM 3109 / JCM 10099 / NBRC 100826 / MSB8)).